The primary structure comprises 526 residues: AAA ATPase forming ring-shaped complexes (526 aa).

Positions 1-18 (MGDMASSTDPAAHNSFSD) are enriched in polar residues. Residues 1–20 (MGDMASSTDPAAHNSFSDFN) form a disordered region. Residues 20-59 (NREEMTRLADNVRSLQRTNQDLSARNTKLAEMLKSSRDKL) are a coiled coil. Residue 257–262 (GCGKTL) coordinates ATP.

The protein belongs to the AAA ATPase family. Homohexamer. Assembles into a hexameric ring structure.

The polypeptide is AAA ATPase forming ring-shaped complexes (Corynebacterium efficiens (strain DSM 44549 / YS-314 / AJ 12310 / JCM 11189 / NBRC 100395)).